Here is a 157-residue protein sequence, read N- to C-terminus: Protein-export protein SecB (157 aa).

The protein belongs to the SecB family. As to quaternary structure, homotetramer, a dimer of dimers. One homotetramer interacts with 1 SecA dimer.

The protein resides in the cytoplasm. In terms of biological role, one of the proteins required for the normal export of preproteins out of the cell cytoplasm. It is a molecular chaperone that binds to a subset of precursor proteins, maintaining them in a translocation-competent state. It also specifically binds to its receptor SecA. This Alcanivorax borkumensis (strain ATCC 700651 / DSM 11573 / NCIMB 13689 / SK2) protein is Protein-export protein SecB.